The chain runs to 3567 residues: Sushi, von Willebrand factor type A, EGF and pentraxin domain-containing protein 1 (3567 aa).

The N-terminal stretch at 1–17 is a signal peptide; sequence MWSRLAFCCWALALVSG. The VWFA domain occupies 84 to 265; that stretch reads ELVFLVDESS…LARRALHEDL (182 aa). N187 carries N-linked (GlcNAc...) asparagine glycosylation. 3 Sushi domains span residues 377–436, 437–496, and 497–561; these read VHCP…FCRV, RTCP…RCVE, and RHCA…VCKD. 6 disulfide bridges follow: C379–C421, C407–C434, C439–C481, C467–C494, C499–C544, and C530–C559. HYR domains are found at residues 560–644 and 645–724; these read KDVE…KVID and VEPP…VIKG. Residues 725–789 form the Sushi 4 domain; sequence SPCEVPFTPV…YSTEWPDCAI (65 aa). Cystine bridges form between C727/C769, C753/C787, C1196/C1207, C1201/C1216, C1218/C1227, C1234/C1245, C1239/C1254, C1256/C1265, C1272/C1283, C1277/C1292, C1294/C1303, C1310/C1321, C1315/C1330, C1332/C1341, C1348/C1359, C1353/C1368, C1370/C1379, C1386/C1397, C1391/C1406, and C1408/C1417. The EGF-like 1 domain maps to 1192–1228; sequence VFHECFLNPCHNSGTCQQLGRGYVCLCPPGYTGLKCE. The 37-residue stretch at 1230 to 1266 folds into the EGF-like 2; calcium-binding domain; sequence DIDECSSLPCLNGGICRDQVGGFTCECSLGYSGQICE. The region spanning 1268–1304 is the EGF-like 3; calcium-binding domain; that stretch reads NINECISSPCLNKGTCTDGLASYRCTCVKGYMGVHCE. In terms of domain architecture, EGF-like 4; calcium-binding spans 1306–1342; it reads DVNECQSSPCLNNAVCKDQVGGFSCKCPPGFLGTRCE. In terms of domain architecture, EGF-like 5; calcium-binding spans 1344–1380; that stretch reads NVDECLSQPCQNGATCKDGANSFRCQCPAGFTGTHCE. In terms of domain architecture, EGF-like 6; calcium-binding spans 1382 to 1418; sequence NINECQSNPCRNQATCVDELNSYSCKCQPGFSGHRCE. Residues 1423 to 1627 enclose the Pentraxin (PTX) domain; that stretch reads SGFNLDFEVS…VKVDSSSMFC (205 aa). 2 Sushi domains span residues 1628 to 1686 and 1687 to 1744; these read SDCP…HCER and IRCG…SCLD. Disulfide bonds link C1630–C1671, C1657–C1684, C1689–C1729, C1715–C1742, C1748–C1760, C1754–C1769, C1771–C1782, C1788–C1828, C1814–C1841, C1846–C1886, C1872–C1899, C1904–C1944, C1930–C1957, C1962–C2002, C1988–C2015, C2020–C2060, C2046–C2077, C2082–C2125, C2111–C2140, C2145–C2185, C2171–C2198, C2203–C2244, C2230–C2258, C2263–C2303, C2289–C2317, C2322–C2362, C2348–C2375, C2380–C2421, C2407–C2434, C2439–C2479, C2465–C2492, C2497–C2537, C2523–C2550, C2555–C2595, and C2581–C2607. An EGF-like 7; calcium-binding domain is found at 1744 to 1783; the sequence is DVDECAVGSDCSEHASCLNTNGSYVCSCNPPYTGDGKNCA. 14 consecutive Sushi domains span residues 1780–1843, 1844–1901, 1902–1959, 1960–2017, 2018–2079, 2080–2142, 2143–2200, 2201–2260, 2261–2319, 2320–2377, 2378–2436, 2437–2494, 2495–2552, and 2553–2609; these read KNCA…SCEA, ISCG…VCEL, VKCS…SCQL, VSCG…QCLA, VSCD…RCIA, HFCE…QCIP, VRCG…TCHP, VSCN…SCTP, LNCG…KCVP, TKCA…ICKM, VLCP…ECVP, VECP…MCKP, IECP…SCDA, and IHCS…TCVP. Positions 2638 to 2645 are important for the interaction with integrin ITGA9:ITGB1; that stretch reads DMMEVPYL. 14 consecutive Sushi domains span residues 2660–2711, 2712–2769, 2770–2827, 2828–2885, 2886–2943, 2944–3001, 3002–3057, 3058–3115, 3116–3174, 3175–3234, 3235–3292, 3293–3350, 3351–3409, and 3410–3466; these read NTKE…SCIS, IECD…RCEA, ISCS…MCIP, VDCG…SCMP, VRCP…VCKP, ATCG…SCLP, CRCS…LCEH, AQCG…TCEP, LSCG…TCSP, KKCP…SCIP, VVCG…VCRE, NRCE…LCKP, NPCP…RCEK, and ISCG…VCRA. Disulfide bonds link C2682-C2709, C2714-C2754, C2740-C2767, C2772-C2812, C2798-C2825, C2830-C2870, C2856-C2883, C2888-C2928, C2914-C2941, C2946-C2986, C2972-C2999, C3004-C3043, C3029-C3055, C3060-C3100, C3086-C3113, C3118-C3159, C3144-C3172, C3177-C3217, C3203-C3232, C3237-C3277, C3263-C3290, C3295-C3335, C3321-C3348, C3353-C3394, C3380-C3407, C3412-C3452, C3438-C3464, C3500-C3510, C3504-C3516, C3518-C3527, C3532-C3542, C3536-C3548, and C3550-C3559. 2 EGF-like domains span residues 3496-3528 and 3529-3560; these read EEPICILPCLNGGRCVAPYQCDCPTGWTGSRCH and TATCQSPCLNGGKCIRPNRCHCLSAWTGHDCS.

In terms of assembly, interacts (via Sushi domain 21) with ITGA9:ITGB1; thereby inhibits Ca(2+) intracellular signaling and as a result represses vasocontraction. Interacts (via Sushi domain 21) with ITGA4:ITGB1; thereby inhibits Ca(2+) intracellular signaling and as a result represses vasocontraction. Interacts with ANGPT1 and ANGPT2. Interacts with PEAR1 (via extracellular domain). Interacts with HSPG2, TLN1, FN1, COPA, CCT2, IQGAP1, LAMC1 and NID1. Interacts (via C-terminus) with TIE1. As to expression, expressed in the media layer of the arterial wall (at protein level). Highly expressed in lung and placenta, weakly expressed in the kidney, heart, brain and spleen. Also expressed in bone and periosteum, but not in cartilage and skeletal muscle.

The protein resides in the secreted. It localises to the nucleus. The protein localises to the cytoplasm. It is found in the membrane. Its function is as follows. Required for morphological development, cell alignment and migration of lymphatic endothelial cells during embryonic development, potentially via modulation of ANGPT2-TIE1 signaling and subsequent activation of FOXC2 transcription. Required for embryonic lymphatic vascular development, via mediating the correct formation of the first lymphovenous contact site and tight association of the lymphatic endothelium with the venous endothelium. Represses PRKCA-mediated L-type voltage-gated channel Ca(2+) influx and ROCK-mediated calcium sensitivity in vascular smooth muscle cells, via its interaction with integrins, thereby inhibiting vasocontraction. Promotes platelet activation, via its interaction with PEAR1 and subsequent activation of AKT/mTOR signaling. Plays a role in epidermal development and keratinocyte differentiation, independent of cell-cell adhesion. May play a role in initial cell attachment of stromal osteogenic cells. May promote myoblast cell adhesion when in the presence of integrin ITGA9:ITGB1. In Mus musculus (Mouse), this protein is Sushi, von Willebrand factor type A, EGF and pentraxin domain-containing protein 1 (Svep1).